Consider the following 306-residue polypeptide: MADKIAVLLGGTSAERDVSLNSGAAVLAGLREGGIDAHPVDPQEVDVAQLKAMGFQKVFIALHGRGGEDGTLQGMLELLGLPYTGSGVMASALSMDKLRSKLLWQGAGLPVAPWVALTRAEFEKGLSEEQKARISALGLPLIVKPSREGSSVGMTKVVEENALQGALSLAFQHDDEILIEKWLCGPEFTVAIVGEEILPSIRIQPAGTFYDYEAKYLSDETQYFCPAGLEASQEAALQSLVLQAWKALGCTGWGRIDVMLDSDGQFYLLEANTSPGMTSHSLVPMAARQAGMSFSQLVVRILELAD.

Residues 101–303 (KLLWQGAGLP…FSQLVVRILE (203 aa)) enclose the ATP-grasp domain. 134-189 (ISALGLPLIVKPSREGSSVGMTKVVEENALQGALSLAFQHDDEILIEKWLCGPEFT) serves as a coordination point for ATP. 3 residues coordinate Mg(2+): Asp-257, Glu-270, and Asn-272.

It belongs to the D-alanine--D-alanine ligase family. Requires Mg(2+) as cofactor. Mn(2+) is required as a cofactor.

The protein resides in the cytoplasm. The catalysed reaction is 2 D-alanine + ATP = D-alanyl-D-alanine + ADP + phosphate + H(+). It functions in the pathway cell wall biogenesis; peptidoglycan biosynthesis. Functionally, cell wall formation. The chain is D-alanine--D-alanine ligase from Salmonella paratyphi A (strain ATCC 9150 / SARB42).